The following is a 270-amino-acid chain: Formamidopyrimidine-DNA glycosylase (270 aa).

The Schiff-base intermediate with DNA role is filled by P2. E3 (proton donor) is an active-site residue. K58 acts as the Proton donor; for beta-elimination activity in catalysis. Residues H91, R109, and R151 each coordinate DNA. The FPG-type zinc finger occupies 236–270 (QVYGKTGQQCPSCETPLKAVKLAARASVYCPECQS). R260 (proton donor; for delta-elimination activity) is an active-site residue.

Belongs to the FPG family. In terms of assembly, monomer. Requires Zn(2+) as cofactor.

It carries out the reaction Hydrolysis of DNA containing ring-opened 7-methylguanine residues, releasing 2,6-diamino-4-hydroxy-5-(N-methyl)formamidopyrimidine.. The catalysed reaction is 2'-deoxyribonucleotide-(2'-deoxyribose 5'-phosphate)-2'-deoxyribonucleotide-DNA = a 3'-end 2'-deoxyribonucleotide-(2,3-dehydro-2,3-deoxyribose 5'-phosphate)-DNA + a 5'-end 5'-phospho-2'-deoxyribonucleoside-DNA + H(+). In terms of biological role, involved in base excision repair of DNA damaged by oxidation or by mutagenic agents. Acts as a DNA glycosylase that recognizes and removes damaged bases. Has a preference for oxidized purines, such as 7,8-dihydro-8-oxoguanine (8-oxoG). Has AP (apurinic/apyrimidinic) lyase activity and introduces nicks in the DNA strand. Cleaves the DNA backbone by beta-delta elimination to generate a single-strand break at the site of the removed base with both 3'- and 5'-phosphates. The chain is Formamidopyrimidine-DNA glycosylase from Psychromonas ingrahamii (strain DSM 17664 / CCUG 51855 / 37).